A 74-amino-acid polypeptide reads, in one-letter code: Histone H1.C8/H1.M1 (74 aa).

Residues 1-74 (MSDAAVPPKK…KAVKKAPKKK (74 aa)) form a disordered region. Residues 11–74 (ASPKKAAAKK…KAVKKAPKKK (64 aa)) are compositionally biased toward basic residues.

It is found in the nucleus. The protein localises to the chromosome. In Trypanosoma cruzi, this protein is Histone H1.C8/H1.M1.